The sequence spans 303 residues: Dehydrodolichyl diphosphate synthase 1 (303 aa).

Residues 14–34 traverse the membrane as a helical segment; it reads LLFLFLIPCLFITSYIGFPVF.

Belongs to the UPP synthase family. Requires Mg(2+) as cofactor. As to expression, expressed in low levels in the whole plant. Preferentially expressed in roots.

Its subcellular location is the endoplasmic reticulum membrane. The enzyme catalyses n isopentenyl diphosphate + (2E,6E)-farnesyl diphosphate = a di-trans,poly-cis-polyprenyl diphosphate + n diphosphate. The protein operates within protein modification; protein glycosylation. Functionally, catalyzes cis-prenyl chain elongation to produce the polyprenyl backbone of dolichol, a glycosyl carrier-lipid required for the biosynthesis of several classes of glycoprotein. This Arabidopsis thaliana (Mouse-ear cress) protein is Dehydrodolichyl diphosphate synthase 1 (DPS).